A 453-amino-acid polypeptide reads, in one-letter code: Trypanin (453 aa).

Residues Met-1–Gly-10 are compositionally biased toward basic and acidic residues. The tract at residues Met-1–Val-22 is disordered. Coiled-coil stretches lie at residues Thr-60–Val-156 and Ser-185–Glu-377.

This sequence belongs to the DRC4 family.

It is found in the cytoplasm. It localises to the cytoskeleton. Its subcellular location is the cell projection. The protein resides in the cilium. The protein localises to the flagellum. Functionally, cytoskeletal linker that plays a central role in the flagellum cell motility. Required for directional cell motility. Plays a role as part of a dynein regulatory system that regulates flagellar beat in response to signals from the central pair apparatus and radial spokes in procyclic cells. Also plays an essential role in the bloodstream form of the trypanosomes as its silencing is lethal for the circulating form. This Trypanosoma brucei rhodesiense protein is Trypanin.